Reading from the N-terminus, the 165-residue chain is Ubiquitin-conjugating enzyme E2 G2 (165 aa).

Ala2 bears the N-acetylalanine mark. One can recognise a UBC core domain in the interval 4–164 (TALKRLMAEY…AKQIVQKSLG (161 aa)). Residue Cys89 is the Glycyl thioester intermediate of the active site.

The protein belongs to the ubiquitin-conjugating enzyme family. As to quaternary structure, interacts with AUP1 (via C-terminus); the interaction recruits UBE2G2 to lipid droplets. Interacts with ubiquitin ligases AMFR/gp78 and RNF139/TRC8; recruitment to lipid droplets by AUP1 facilitates interaction of UBE2G2 with AMFR and RNF139, leading to sterol-induced ubiquitination of 3-hydroxy-3-methylglutaryl coenzyme A reductase and its subsequent proteasomal degradation.

It localises to the endoplasmic reticulum. It is found in the lipid droplet. The enzyme catalyses S-ubiquitinyl-[E1 ubiquitin-activating enzyme]-L-cysteine + [E2 ubiquitin-conjugating enzyme]-L-cysteine = [E1 ubiquitin-activating enzyme]-L-cysteine + S-ubiquitinyl-[E2 ubiquitin-conjugating enzyme]-L-cysteine.. Its pathway is protein modification; protein ubiquitination. Its function is as follows. Accepts ubiquitin from the E1 complex and catalyzes its covalent attachment to other proteins. In vitro catalyzes 'Lys-48'-linked polyubiquitination. Involved in endoplasmic reticulum-associated degradation (ERAD). Required for sterol-induced ubiquitination of 3-hydroxy-3-methylglutaryl coenzyme A reductase and its subsequent proteasomal degradation. This Homo sapiens (Human) protein is Ubiquitin-conjugating enzyme E2 G2.